We begin with the raw amino-acid sequence, 539 residues long: T-complex protein 1 subunit zeta (539 aa).

The protein belongs to the TCP-1 chaperonin family. In terms of assembly, heterooligomeric complex of about 850 to 900 kDa that forms two stacked rings, 12 to 16 nm in diameter.

The protein localises to the cytoplasm. Functionally, molecular chaperone; assists the folding of proteins upon ATP hydrolysis. Known to play a role, in vitro, in the folding of actin and tubulin. The chain is T-complex protein 1 subunit zeta (cct6) from Dictyostelium discoideum (Social amoeba).